The chain runs to 158 residues: MKDESVLNVLMYLFKNHMQENCTLDLGEKKLLVQLEELGFHRTVIDQALSWLNNLSYSAREPMQLPQKNSFRVFSDYECDLLDTECRRFLITLEQQAILNPHTRELVINQALELSCEGIDVSLLKWVTLMVLFNQSSEKEALASMELLVLDDTVGGIH.

Belongs to the Smg family.

The polypeptide is Protein Smg homolog (Coxiella burnetii (strain Dugway 5J108-111)).